Here is an 88-residue protein sequence, read N- to C-terminus: MANTSSAKKATRKIARRTAVNKSRRTQMRGSVRTVEEAIASGDRDAAVKALANAEPALMRAAQRNIVHKNAASRKVSRLASRIAQLGK.

Residues 1–33 (MANTSSAKKATRKIARRTAVNKSRRTQMRGSVR) form a disordered region.

The protein belongs to the bacterial ribosomal protein bS20 family.

In terms of biological role, binds directly to 16S ribosomal RNA. In Rhodopseudomonas palustris (strain BisB5), this protein is Small ribosomal subunit protein bS20.